Here is a 334-residue protein sequence, read N- to C-terminus: Holliday junction branch migration complex subunit RuvB (334 aa).

The large ATPase domain (RuvB-L) stretch occupies residues 1–182 (MNERMVDQSM…FGVHLRLEYY (182 aa)). Residues Leu21, Arg22, Gly63, Lys66, Thr67, Thr68, 129-131 (EDF), Arg172, Tyr182, and Arg219 each bind ATP. Thr67 serves as a coordination point for Mg(2+). Positions 183 to 253 (NESDLKEIII…TTKHALGLLQ (71 aa)) are small ATPAse domain (RuvB-S). The tract at residues 256-334 (QHGLDYIDHK…HFAKSNEERG (79 aa)) is head domain (RuvB-H). DNA is bound by residues Arg292, Arg311, and Arg316.

Belongs to the RuvB family. Homohexamer. Forms an RuvA(8)-RuvB(12)-Holliday junction (HJ) complex. HJ DNA is sandwiched between 2 RuvA tetramers; dsDNA enters through RuvA and exits via RuvB. An RuvB hexamer assembles on each DNA strand where it exits the tetramer. Each RuvB hexamer is contacted by two RuvA subunits (via domain III) on 2 adjacent RuvB subunits; this complex drives branch migration. In the full resolvosome a probable DNA-RuvA(4)-RuvB(12)-RuvC(2) complex forms which resolves the HJ.

It is found in the cytoplasm. The enzyme catalyses ATP + H2O = ADP + phosphate + H(+). Functionally, the RuvA-RuvB-RuvC complex processes Holliday junction (HJ) DNA during genetic recombination and DNA repair, while the RuvA-RuvB complex plays an important role in the rescue of blocked DNA replication forks via replication fork reversal (RFR). RuvA specifically binds to HJ cruciform DNA, conferring on it an open structure. The RuvB hexamer acts as an ATP-dependent pump, pulling dsDNA into and through the RuvAB complex. RuvB forms 2 homohexamers on either side of HJ DNA bound by 1 or 2 RuvA tetramers; 4 subunits per hexamer contact DNA at a time. Coordinated motions by a converter formed by DNA-disengaged RuvB subunits stimulates ATP hydrolysis and nucleotide exchange. Immobilization of the converter enables RuvB to convert the ATP-contained energy into a lever motion, pulling 2 nucleotides of DNA out of the RuvA tetramer per ATP hydrolyzed, thus driving DNA branch migration. The RuvB motors rotate together with the DNA substrate, which together with the progressing nucleotide cycle form the mechanistic basis for DNA recombination by continuous HJ branch migration. Branch migration allows RuvC to scan DNA until it finds its consensus sequence, where it cleaves and resolves cruciform DNA. The polypeptide is Holliday junction branch migration complex subunit RuvB (Staphylococcus aureus (strain N315)).